We begin with the raw amino-acid sequence, 117 residues long: Hemerythrin subunit beta (117 aa).

Fe cation is bound by residues His-24, His-53, Glu-57, His-72, His-76, His-105, and Asp-110.

It belongs to the hemerythrin family. As to quaternary structure, octamer composed of two types of chains: alpha and beta.

Functionally, hemerythrin is a respiratory protein in blood cells of certain marine worms. The oxygen-binding site in each chain contains two iron atoms. In Lingula anatina (Brachiopod), this protein is Hemerythrin subunit beta.